A 248-amino-acid polypeptide reads, in one-letter code: Tryptophan synthase alpha chain (248 aa).

Residues Glu-36 and Asp-47 each act as proton acceptor in the active site.

The protein belongs to the TrpA family. As to quaternary structure, tetramer of two alpha and two beta chains.

The enzyme catalyses (1S,2R)-1-C-(indol-3-yl)glycerol 3-phosphate + L-serine = D-glyceraldehyde 3-phosphate + L-tryptophan + H2O. It functions in the pathway amino-acid biosynthesis; L-tryptophan biosynthesis; L-tryptophan from chorismate: step 5/5. Its function is as follows. The alpha subunit is responsible for the aldol cleavage of indoleglycerol phosphate to indole and glyceraldehyde 3-phosphate. The sequence is that of Tryptophan synthase alpha chain from Pyrococcus furiosus (strain ATCC 43587 / DSM 3638 / JCM 8422 / Vc1).